The primary structure comprises 154 residues: MFASVELSSYRDQHFKGSRSEQERSLRDSCTLYVGNLSFYTTEEQIHELFSRCGDVRVIVMGLDKYKKTPCGFCFVEYYVRSEAEAAMRFVNGTRLDDRLIRVDWDAGFVEGRQYGRGKTGGQVRDEYRTDYDAGRGGYGKLLSQKIAPNTDNR.

MRNA is bound by residues Tyr-10, Tyr-33, 102–106 (RVDWD), 113–117 (RQYGR), and 123–124 (QV). In terms of domain architecture, RRM spans 30 to 108 (CTLYVGNLSF…RLIRVDWDAG (79 aa)).

Belongs to the RRM NCBP2 family. In terms of assembly, component of the nuclear cap-binding complex (CBC), a heterodimer composed of Cbp80 and Cbp20 that interacts with m7GpppG-capped RNA. Interacts with Ars2.

It is found in the nucleus. Functionally, component of the cap-binding complex (CBC), which binds co-transcriptionally to the 5' cap of pre-mRNAs and is involved in various processes such as pre-mRNA splicing and RNA-mediated gene silencing (RNAi). The CBC complex is involved in miRNA-mediated RNA interference via its interaction with Ars2 and is required for primary microRNAs (miRNAs) processing. Also involved in innate immunity via the short interfering RNAs (siRNAs) processing machinery by restricting the viral RNA production. In the CBC complex, Cbp20 recognizes and binds capped RNAs (m7GpppG-capped RNA) but requires Cbp80 to stabilize the movement of its N-terminal loop and lock the CBC into a high affinity cap-binding state with the cap structure. This chain is Nuclear cap-binding protein subunit 2 (Cbp20), found in Drosophila melanogaster (Fruit fly).